The chain runs to 166 residues: PTS system glucose-specific EIIA component (166 aa).

A PTS EIIA type-1 domain is found at 34–138 (DPVFAQKMMG…SVISPIIITN (105 aa)). 2 residues coordinate Zn(2+): histidine 71 and histidine 86. Residue histidine 86 is the Tele-phosphohistidine intermediate; for EIIA activity of the active site. Histidine 86 is subject to Phosphohistidine; by HPr.

As to quaternary structure, heterodimer with glycerol kinase (glpk). Zn(2+) serves as cofactor.

It is found in the cytoplasm. Functionally, the phosphoenolpyruvate-dependent sugar phosphotransferase system (sugar PTS), a major carbohydrate active transport system, catalyzes the phosphorylation of incoming sugar substrates concomitantly with their translocation across the cell membrane. The enzyme II complex composed of PtsG and Crr is involved in glucose transport. The polypeptide is PTS system glucose-specific EIIA component (crr) (Staphylococcus aureus (strain Mu50 / ATCC 700699)).